A 131-amino-acid polypeptide reads, in one-letter code: Small ribosomal subunit protein uS11 (131 aa).

This sequence belongs to the universal ribosomal protein uS11 family. Part of the 30S ribosomal subunit. Interacts with proteins S7 and S18. Binds to IF-3.

Functionally, located on the platform of the 30S subunit, it bridges several disparate RNA helices of the 16S rRNA. Forms part of the Shine-Dalgarno cleft in the 70S ribosome. This Helicobacter pylori (strain G27) protein is Small ribosomal subunit protein uS11.